Here is a 642-residue protein sequence, read N- to C-terminus: 1,4-alpha-glucan branching enzyme GlgB (642 aa).

Aspartate 304 serves as the catalytic Nucleophile. Catalysis depends on glutamate 355, which acts as the Proton donor.

The protein belongs to the glycosyl hydrolase 13 family. GlgB subfamily. Monomer.

The catalysed reaction is Transfers a segment of a (1-&gt;4)-alpha-D-glucan chain to a primary hydroxy group in a similar glucan chain.. It participates in glycan biosynthesis; glycogen biosynthesis. Catalyzes the formation of the alpha-1,6-glucosidic linkages in glycogen by scission of a 1,4-alpha-linked oligosaccharide from growing alpha-1,4-glucan chains and the subsequent attachment of the oligosaccharide to the alpha-1,6 position. This chain is 1,4-alpha-glucan branching enzyme GlgB, found in Streptococcus pneumoniae serotype 2 (strain D39 / NCTC 7466).